The following is a 169-amino-acid chain: S-ribosylhomocysteine lyase (169 aa).

3 residues coordinate Fe cation: His-54, His-58, and Cys-128.

Belongs to the LuxS family. In terms of assembly, homodimer. Fe cation serves as cofactor.

The catalysed reaction is S-(5-deoxy-D-ribos-5-yl)-L-homocysteine = (S)-4,5-dihydroxypentane-2,3-dione + L-homocysteine. Involved in the synthesis of autoinducer 2 (AI-2) which is secreted by bacteria and is used to communicate both the cell density and the metabolic potential of the environment. The regulation of gene expression in response to changes in cell density is called quorum sensing. Catalyzes the transformation of S-ribosylhomocysteine (RHC) to homocysteine (HC) and 4,5-dihydroxy-2,3-pentadione (DPD). This Tolumonas auensis (strain DSM 9187 / NBRC 110442 / TA 4) protein is S-ribosylhomocysteine lyase.